Reading from the N-terminus, the 370-residue chain is 1-propanol dehydrogenase PduQ (370 aa).

Belongs to the iron-containing alcohol dehydrogenase family. Interacts with PduP, probably via the N-terminus of PduQ. Fe cation serves as cofactor.

It is found in the bacterial microcompartment. It catalyses the reaction 1-propanol + NAD(+) = propanal + NADH + H(+). It functions in the pathway polyol metabolism; 1,2-propanediol degradation. In terms of biological role, an iron-dependent alcohol dehydrogenase required for optimal 1,2-propanediol (1,2-PD) degradation. NAD(+) and NADH are regenerated internally within the bacterial microcompartment (BMC) dedicated to 1,2-PD degradation by the PduP and PduQ enzymes, which reduce NAD(+) and oxidize NADH respectively, although there must also be cofactor transport across the BMC. Functionally, expression of a cosmid containing the full 21-gene pdu operon in E.coli allows E.coli to grow on 1,2-propanediol (1,2-PD) with the appearance of bacterial microcompartments (BMC) in its cytoplasm. The 1,2-PD-specific bacterial microcompartment (BMC) concentrates low levels of 1,2-PD catabolic enzymes, concentrates volatile reaction intermediates thus enhancing pathway flux and keeps the level of toxic, mutagenic propionaldehyde low. The sequence is that of 1-propanol dehydrogenase PduQ from Citrobacter freundii.